Here is a 282-residue protein sequence, read N- to C-terminus: ATP synthase subunit a (282 aa).

A run of 5 helical transmembrane segments spans residues 45–65 (AIHV…LWLF), 106–126 (IAPL…MDLI), 160–179 (INAT…FYSI), 232–252 (LIFI…SVPW), and 253–273 (AIFH…LTIV).

It belongs to the ATPase A chain family. F-type ATPases have 2 components, CF(1) - the catalytic core - and CF(0) - the membrane proton channel. CF(1) has five subunits: alpha(3), beta(3), gamma(1), delta(1), epsilon(1). CF(0) has three main subunits: a(1), b(2) and c(9-12). The alpha and beta chains form an alternating ring which encloses part of the gamma chain. CF(1) is attached to CF(0) by a central stalk formed by the gamma and epsilon chains, while a peripheral stalk is formed by the delta and b chains.

The protein localises to the cell inner membrane. Its function is as follows. Key component of the proton channel; it plays a direct role in the translocation of protons across the membrane. The chain is ATP synthase subunit a from Marinomonas sp. (strain MWYL1).